Here is a 387-residue protein sequence, read N- to C-terminus: Succinate--CoA ligase [ADP-forming] subunit beta (387 aa).

Residues K46, 53 to 55 (GRG), E99, A102, and E107 contribute to the ATP site. The Mg(2+) site is built by N199 and D213. Substrate contacts are provided by residues N264 and 321–323 (GIV).

This sequence belongs to the succinate/malate CoA ligase beta subunit family. In terms of assembly, heterotetramer of two alpha and two beta subunits. Mg(2+) serves as cofactor.

The catalysed reaction is succinate + ATP + CoA = succinyl-CoA + ADP + phosphate. It carries out the reaction GTP + succinate + CoA = succinyl-CoA + GDP + phosphate. It functions in the pathway carbohydrate metabolism; tricarboxylic acid cycle; succinate from succinyl-CoA (ligase route): step 1/1. Its function is as follows. Succinyl-CoA synthetase functions in the citric acid cycle (TCA), coupling the hydrolysis of succinyl-CoA to the synthesis of either ATP or GTP and thus represents the only step of substrate-level phosphorylation in the TCA. The beta subunit provides nucleotide specificity of the enzyme and binds the substrate succinate, while the binding sites for coenzyme A and phosphate are found in the alpha subunit. This Campylobacter jejuni subsp. doylei (strain ATCC BAA-1458 / RM4099 / 269.97) protein is Succinate--CoA ligase [ADP-forming] subunit beta.